The following is a 291-amino-acid chain: Undecaprenyl-diphosphatase (291 aa).

A run of 8 helical transmembrane segments spans residues 1–21, 48–68, 102–122, 126–146, 162–182, 203–223, 231–251, and 267–287; these read MFIIELIKGIILGVVEGLTEF, SAFTFKIVIQLGSVFAAAWVF, LHVLVGMVPAGILGLLFDDFI, LFSVPTVMIGLFVGAIYMIIA, ISYFQAFVIGISQAVAMWPGF, SDFTFIMAVPIMLAASGLSLL, IADIPFYILGFLAAFTVGLIA, and FAIYRIVLVIFIAILYFGFGI.

Belongs to the UppP family.

Its subcellular location is the cell membrane. The catalysed reaction is di-trans,octa-cis-undecaprenyl diphosphate + H2O = di-trans,octa-cis-undecaprenyl phosphate + phosphate + H(+). Catalyzes the dephosphorylation of undecaprenyl diphosphate (UPP). Confers resistance to bacitracin. This Staphylococcus aureus (strain COL) protein is Undecaprenyl-diphosphatase.